Reading from the N-terminus, the 99-residue chain is Putative protein adenylyltransferase MJ0141 (99 aa).

A GSX(10)DXD motif motif is present at residues 29-43 (GSYARGDYDEESDVD). Positions 41 and 43 each coordinate Mg(2+).

Belongs to the MntA antitoxin family. Mg(2+) is required as a cofactor.

The enzyme catalyses L-tyrosyl-[protein] + ATP = O-(5'-adenylyl)-L-tyrosyl-[protein] + diphosphate. The catalysed reaction is O-(5'-adenylyl)-L-tyrosyl-[protein] + ATP = O-[5'-(adenylyl-(5'-&gt;3')-adenylyl)]-L-tyrosyl-[protein] + diphosphate. Putative antitoxin component of a putative type VII toxin-antitoxin (TA) system. Its cognate toxin might be MF0142, which it might AMPylate. This Methanocaldococcus jannaschii (strain ATCC 43067 / DSM 2661 / JAL-1 / JCM 10045 / NBRC 100440) (Methanococcus jannaschii) protein is Putative protein adenylyltransferase MJ0141.